The following is a 617-amino-acid chain: V-type proton ATPase catalytic subunit A (617 aa).

Residue Thr136 is modified to Phosphothreonine. 250–257 (GAFGCGKT) contributes to the ATP binding site. Ser384 bears the Phosphoserine; by AMPK mark.

Belongs to the ATPase alpha/beta chains family. V-ATPase is a heteromultimeric enzyme made up of two complexes: the ATP-hydrolytic V1 complex and the proton translocation V0 complex. The V1 complex consists of three catalytic AB heterodimers that form a heterohexamer, three peripheral stalks each consisting of EG heterodimers, one central rotor including subunits D and F, and the regulatory subunits C and H. The proton translocation complex V0 consists of the proton transport subunit a, a ring of proteolipid subunits c9c'', rotary subunit d, subunits e and f, and the accessory subunits ATP6AP1/Ac45 and ATP6AP2/PRR. Interacts with the V0 complex V-ATPase subunit a4 ATP6V0A4. Interacts with WFS1. Interacts with alpha-crystallin B chain/CRYAB and with MTOR, forming a ternary complex. Post-translationally, phosphorylation at Ser-384 by AMPK down-regulates its enzyme activity.

The protein resides in the cytoplasm. The protein localises to the cytosol. Its subcellular location is the cytoplasmic vesicle. It localises to the secretory vesicle. It is found in the clathrin-coated vesicle membrane. The protein resides in the lysosome. It carries out the reaction ATP + H2O + 4 H(+)(in) = ADP + phosphate + 5 H(+)(out). Its activity is regulated as follows. ATP hydrolysis occurs at the interface between the nucleotide-binding domains of subunits A and B. ATP hydrolysis triggers a conformational change in the subunits D and F, which induces a shift of subunit d. The c-ring is subsequently rotated and results in a continuous proton translocation across the membrane. Catalytic subunit of the V1 complex of vacuolar(H+)-ATPase (V-ATPase), a multisubunit enzyme composed of a peripheral complex (V1) that hydrolyzes ATP and a membrane integral complex (V0) that translocates protons. V-ATPase is responsible for acidifying and maintaining the pH of intracellular compartments and in some cell types, is targeted to the plasma membrane, where it is responsible for acidifying the extracellular environment. In aerobic conditions, involved in intracellular iron homeostasis, thus triggering the activity of Fe(2+) prolyl hydroxylase (PHD) enzymes, and leading to HIF1A hydroxylation and subsequent proteasomal degradation. May play a role in neurite development and synaptic connectivity. In Sus scrofa (Pig), this protein is V-type proton ATPase catalytic subunit A (ATP6V1A).